The chain runs to 1077 residues: MAGVLCPTEEDRSIRAAVRMLPPQPCPDESGGYRRMSGPTLSQVQEEPAAETPQPPAPASTAEDDVRKRGYLRKQKHGHKRYFVLRSQSHLGPARLEYYDNEKKFRSGQRSGCHPKRVIPLYLCFTVSRRADAKNKHLVALYTKDEYFAMAAENEQEQDGWYQALSELINESKGACLDTEELEENYGTLRPGTVFKEVWQVNVKPRGLGQAKNLSGVYRLCLSSKAVHLVKLNSDVACVHLLLMNIRRCGHSENYFFIEVGRSSSTGAGELWMQVDDCVVAQHMHETFLDTMKALKAYSEFRPRSKSQSSGTNPISFITTRRYLGNLPPSQTGLQQRRARTETVVGTPPSAKNNSFRFRTSSEGEGTMTRPFRSVTGSLSHLNTARINLGKQEGVGRYVRAPFNSGYHSRSASLPVSHFPSATSPISVCSSNGHGSASETLTRPSSSSVCGSPSDGGFISSDEYGSSPGDLRYFRVRSNTPDSLGNTPPIQEENTLSDYMSMSAHSQPDSRDDYMEADKCFRKRTYSLTKPTNAASQQKSQTAVSLDEDSEETNKQFAYAESPKLKDSSHVEDYSNGVIDSVCNHSRRKASDDGYMPMMPSNSYDSDYLPMAPKSVSAPKQINSCPSQVDSKGYMMMFPVNGSPVKNVFGGAATKSNIEKLSNGGYMDMSYGNSIKQVHDSSLNNNSRGLSSYFSLPRSFKSLTKQTSDHSEYVPMSSPGKLLHLGAENGVDACTNGADHNVAKTELKSPSSTLDQQVKRPTKLMLGIRGSNTIPRMFDHSASAEPTSPGEYINIDFSDKASSTPCSLSAEGSPSSLGSSCDHRHSPLSDYMSVDIDVQSPKATADLCDSLTDISPYACTVVSRMQPNAEYAKLPCGTACVSKTDNRIDDYTTMTFNMAMTPPRSFAGETENGTKVDSPSSIVNRLCIGDLTSLNGGFSLPNPLPEPMAGPKVIRADSQGRRRHSSETFSSASTVTTSSSCFTESSKRHSSASFDNVWLKSDENCCEQENKMSRNCSTGFQNGLNYIALSMHDGVCEPTSPACHQHQNGSRILENGGYVSIDFTRSDCLKCPSSRKD.

Residues 1–66 (MAGVLCPTEE…APASTAEDDV (66 aa)) are disordered. Short sequence motifs (YXXM motif) lie at residues 33–36 (YRRM) and 147–150 (YFAM). The PH domain occupies 65 to 170 (DVRKRGYLRK…WYQALSELIN (106 aa)). In terms of domain architecture, IRS-type PTB spans 195 to 299 (FKEVWQVNVK…DTMKALKAYS (105 aa)). 3 disordered regions span residues 342 to 373 (ETVV…RPFR), 428 to 464 (VCSS…SDEY), and 476 to 495 (VRSN…EENT). Composition is skewed to polar residues over residues 350–364 (SAKN…SSEG) and 428–444 (VCSS…LTRP). A compositionally biased stretch (low complexity) spans 445–457 (SSSSVCGSPSDGG). Polar residues predominate over residues 477-495 (RSNTPDSLGNTPPIQEENT). Residues 499 to 502 (YMSM) carry the YXXM motif 3 motif. The span at 530–544 (KPTNAASQQKSQTAV) shows a compositional bias: polar residues. A disordered region spans residues 530-571 (KPTNAASQQKSQTAVSLDEDSEETNKQFAYAESPKLKDSSHV). 6 consecutive short sequence motifs (YXXM motif) follow at residues 595-598 (YMPM), 608-611 (YLPM), 634-637 (YMMM), 666-669 (YMDM), 713-716 (YVPM), and 891-894 (YTTM).

In terms of processing, phosphorylated by INSR.

In terms of biological role, potentiates insulin signaling. The chain is Insulin receptor substrate 2-B (irs2-b) from Xenopus laevis (African clawed frog).